A 329-amino-acid chain; its full sequence is GMP reductase (329 aa).

The Thioimidate intermediate role is filled by Cys-178. An NADP(+)-binding site is contributed by 207–230; the sequence is IIADGGIRNNGDIAKSIRFGATMC.

The protein belongs to the IMPDH/GMPR family. GuaC type 2 subfamily.

It catalyses the reaction IMP + NH4(+) + NADP(+) = GMP + NADPH + 2 H(+). Its function is as follows. Catalyzes the irreversible NADPH-dependent deamination of GMP to IMP. It functions in the conversion of nucleobase, nucleoside and nucleotide derivatives of G to A nucleotides, and in maintaining the intracellular balance of A and G nucleotides. The sequence is that of GMP reductase from Lacticaseibacillus casei (strain BL23) (Lactobacillus casei).